The following is a 378-amino-acid chain: Cytochrome b (378 aa).

4 helical membrane-spanning segments follow: residues 34–54 (FGSL…FLAM), 78–99 (WLLR…YLHV), 114–134 (WLIG…GYVL), and 179–199 (FFTF…IHLL). Residues His-84 and His-98 each contribute to the heme b site. Heme b contacts are provided by His-183 and His-197. His-202 contributes to the a ubiquinone binding site. The next 4 membrane-spanning stretches (helical) occupy residues 227–247 (FKDI…VLIS), 289–309 (LGGV…PFYN), 321–341 (INQV…WIGA), and 348–368 (YVLI…VNPL).

The protein belongs to the cytochrome b family. As to quaternary structure, the main subunits of complex b-c1 are: cytochrome b, cytochrome c1 and the Rieske protein. It depends on heme b as a cofactor.

Its subcellular location is the mitochondrion inner membrane. Its function is as follows. Component of the ubiquinol-cytochrome c reductase complex (complex III or cytochrome b-c1 complex) that is part of the mitochondrial respiratory chain. The b-c1 complex mediates electron transfer from ubiquinol to cytochrome c. Contributes to the generation of a proton gradient across the mitochondrial membrane that is then used for ATP synthesis. This is Cytochrome b (mt:Cyt-b) from Drosophila sechellia (Fruit fly).